A 683-amino-acid polypeptide reads, in one-letter code: MNEDKDKRDSIQMSMKGCRTNNGFVQNEDIQEQDPDSRDTPQSNAVSIPAPEEPQLKVVRPYAGMPKEVLFQFSGQARYRVPREILFWLTVVSVFLLIGATIAIIIISPKCLDWWQAGPMYQIYPRSFKDSDKDGNGDLKGIQEKLDYITALNIKTIWITSFYKSPLKDFRYAVEDFKEIDPIFGTMKDFENLVAAVHDKGLKLIIDFIPNHTSDKHPWFQSSRTRSGKYTDYYIWHNCTHANGVTTPPNNWLSVYGNSSWQFDEERKQCYFHQFLKEQPDLNFRNPAVQEEIKEIIKFWLSKGVDGFSFDAVKFLLEAKDLRNEIQVNTSQIPDTVTRYSELYHDFTTTQVGMHDLVRDFRQTMNQFSREPGRYRFMGTEVSAESTERTMVYYGLSFIQEADFPFNKYLATLDTLSGHTVYEAITSWMENMPEGKWPNWMIGGPETSRLTSRVGSEYVNAMNMLLFTLPGTPITYYGEEIGMGDISITNLNERYDTNALLSKSPMQWDNSSNAGFTEANHTWLPTNSDYHTVNVDVQKTQPSSALRLYQDLSLLHARELLLSRGWFCLLRDDNHSVVYTRELDGIDKVFLVVLNFGESSTVLNLQETISDVPTKLRIRLSTNPASKGSDVDTHAVSLEKGEGLILEHSMKTLLHHQKAFRDKCFISNRACYSSVLDLLYSSC.

The segment covering 1-10 (MNEDKDKRDS) has biased composition (basic and acidic residues). The tract at residues 1–50 (MNEDKDKRDSIQMSMKGCRTNNGFVQNEDIQEQDPDSRDTPQSNAVSIPA) is disordered. Over 1 to 86 (MNEDKDKRDS…ARYRVPREIL (86 aa)) the chain is Cytoplasmic. Ser-10 is subject to Phosphoserine. Residues 87-107 (FWLTVVSVFLLIGATIAIIII) form a helical; Signal-anchor for type II membrane protein membrane-spanning segment. The Extracellular portion of the chain corresponds to 108 to 683 (SPKCLDWWQA…SVLDLLYSSC (576 aa)). Asn-211 contacts Ca(2+). N-linked (GlcNAc...) asparagine glycosylation is found at Asn-211, Asn-238, and Asn-258. Cys-239 and Cys-270 are joined by a disulfide. 4 residues coordinate Ca(2+): Asp-281, Phe-315, Leu-316, and Glu-318. N-linked (GlcNAc...) asparagine glycosylation is present at Asn-329. Ser-383 carries the phosphoserine modification. Residues Asn-510, Asn-520, and Asn-574 are each glycosylated (N-linked (GlcNAc...) asparagine). Cystine bridges form between Cys-568/Cys-664 and Cys-671/Cys-683.

As to quaternary structure, disulfide-linked heterodimer composed of the catalytic light subunit SLC7A9 and the heavy subunit SLC3A1. The heterodimer is the minimal functional unit. Assembles in non-covalently linked heterotetramers (dimers of heterodimers) and higher order oligomers; the oligomerization is mediated by SLC3A1 likely to prevent degradation in the endoplasmic reticulum and facilitate heteromer trafficking to the plasma membrane. Disulfide-linked heterodimer composed of the catalytic light subunit SLC7A13 and the heavy subunit SLC3A1. In terms of tissue distribution, predominantly expressed in kidney and intestine. In kidney localized to the apical membrane of the proximal tubules.

The protein localises to the cell membrane. The protein resides in the apical cell membrane. Acts as a chaperone that facilitates biogenesis and trafficking of functional transporter heteromers to the plasma membrane. Associates with SLC7A9 to form a functional transporter complex that mediates the electrogenic exchange between cationic amino acids and neutral amino acids, with a stoichiometry of 1:1. SLC7A9-SLC3A1 transporter has system b(0,+)-like activity with high affinity for extracellular cationic amino acids and L-cystine and lower affinity for intracellular neutral amino acids. Substrate exchange is driven by high concentration of intracellular neutral amino acids and the intracellular reduction of L-cystine to L-cysteine. SLC7A9-SLC3A1 acts as a major transporter for reabsorption of L-cystine and dibasic amino acids across the brush border membrane in early proximal tubules. Associates with SLC7A13 to form a functional complex that transports anionic and neutral amino acids via exchange or facilitated diffusion. SLC7A13-SLC3A1 may act as a major transporter for L-cystine in late proximal tubules, ensuring its reabsorption from the luminal fluid in exchange for cytosolic L-glutamate or L-aspartate. This Rattus norvegicus (Rat) protein is Amino acid transporter heavy chain SLC3A1 (Slc3a1).